The following is an 84-amino-acid chain: Large ribosomal subunit protein bL27 (84 aa).

A disordered region spans residues 1 to 22 (MAHKKGGGSTKNGRDSNPKYLG).

This sequence belongs to the bacterial ribosomal protein bL27 family.

This is Large ribosomal subunit protein bL27 from Prosthecochloris aestuarii (strain DSM 271 / SK 413).